The primary structure comprises 249 residues: uncharacterized protein (249 aa).

The protein resides in the cytoplasm. It is found in the nucleus. This is an uncharacterized protein from Schizosaccharomyces pombe (strain 972 / ATCC 24843) (Fission yeast).